The following is a 140-amino-acid chain: Nucleoside diphosphate kinase (140 aa).

ATP contacts are provided by lysine 11, phenylalanine 59, arginine 87, threonine 93, arginine 104, and asparagine 114. Residue histidine 117 is the Pros-phosphohistidine intermediate of the active site.

Belongs to the NDK family. Homotetramer. It depends on Mg(2+) as a cofactor.

The protein resides in the cytoplasm. The enzyme catalyses a 2'-deoxyribonucleoside 5'-diphosphate + ATP = a 2'-deoxyribonucleoside 5'-triphosphate + ADP. It catalyses the reaction a ribonucleoside 5'-diphosphate + ATP = a ribonucleoside 5'-triphosphate + ADP. Major role in the synthesis of nucleoside triphosphates other than ATP. The ATP gamma phosphate is transferred to the NDP beta phosphate via a ping-pong mechanism, using a phosphorylated active-site intermediate. This chain is Nucleoside diphosphate kinase, found in Rickettsia peacockii (strain Rustic).